The primary structure comprises 209 residues: NAD(P)H-quinone oxidoreductase subunit N, chloroplastic (209 aa).

The N-terminal 45 residues, 1 to 45, are a transit peptide targeting the chloroplast; that stretch reads MGSRAICIQRVAPPCFEASQVKKIKTVGSFLVNTRSKRRRSTGVK.

It belongs to the NDH complex subunit N family. Part of the chloroplast NDH complex, composed of a mixture of chloroplast and nucleus encoded subunits. Component of the NDH subcomplex A, at least composed of ndhH, ndhI, ndhJ, ndhK, ndhL, ndhM, ndhN and ndhO.

The protein resides in the plastid. It is found in the chloroplast thylakoid membrane. The enzyme catalyses a plastoquinone + NADH + (n+1) H(+)(in) = a plastoquinol + NAD(+) + n H(+)(out). It carries out the reaction a plastoquinone + NADPH + (n+1) H(+)(in) = a plastoquinol + NADP(+) + n H(+)(out). Functionally, NDH shuttles electrons from NAD(P)H:plastoquinone, via FMN and iron-sulfur (Fe-S) centers, to quinones in the photosynthetic chain and possibly in a chloroplast respiratory chain. The immediate electron acceptor for the enzyme in this species is believed to be plastoquinone. Couples the redox reaction to proton translocation, and thus conserves the redox energy in a proton gradient. This is NAD(P)H-quinone oxidoreductase subunit N, chloroplastic from Arabidopsis thaliana (Mouse-ear cress).